Here is a 323-residue protein sequence, read N- to C-terminus: MKKKKTWKRFLHFSSAALAAGLIFTSAAPAEAAFWGASNELLHDPTMIKEGSSWYALGTGLTEERGLRVLKSSDAKNWTVQKSIFTTPLSWWSNYVPNYGQNQWAPDIQYYNGKYWLYYSVSSFGSNTSAIGLASSTSISSGGWKDEGLVIRSTSSNNYNAIDPELTFDKDGNPWLAFGSFWSGIKLTKLDKSTMKPTGSLYSIAARPNNGGALEAPTLTYQNGYYYLMVSFDKCCDGVNSTYKIAYGRSKSITGPYLDKSGKSMLEGGGTILDSGNDQWKGPGGQDIVNGNILVRHAYDANDNGIPKLLINDLNWSSGWPSY.

The N-terminal stretch at 1–32 is a signal peptide; the sequence is MKKKKTWKRFLHFSSAALAAGLIFTSAAPAEA. The Proton acceptor role is filled by Asp44. Asp44 contacts substrate. Ca(2+) is bound at residue Asp107. Residues Gly125 and 160–163 each bind substrate; that span reads NAID. Position 165 (Glu165) interacts with Ca(2+). 180-182 is a binding site for substrate; the sequence is SFW. The Proton donor role is filled by Glu215. Asp287 lines the Ca(2+) pocket.

It belongs to the glycosyl hydrolase 43 family. Requires Ca(2+) as cofactor.

The protein resides in the secreted. The enzyme catalyses Endohydrolysis of (1-&gt;5)-alpha-arabinofuranosidic linkages in (1-&gt;5)-arabinans.. It participates in glycan metabolism; L-arabinan degradation. Its function is as follows. Involved in the degradation of arabinan and is a key enzyme in the complete degradation of the plant cell wall. Catalyzes the internal cleavage of alpha-(1-&gt;5)-L-arabinofuranosyl residues of linear 1,5-alpha-L-arabinan and of branched sugar beet arabinan. It displays no activity against heavily substituted arabinans or a range of other polysaccharides (larch wood arabinogalactan, wheat arabinoxylan and p-nitrophenyl-alpha-L-arabinofuranoside). The enzyme activity is progressively reduced as alpha-(1-&gt;5)-chains become shorter or more highly substituted. This is Extracellular endo-alpha-(1-&gt;5)-L-arabinanase 1 (abnA) from Bacillus subtilis (strain 168).